The sequence spans 271 residues: Formamidopyrimidine-DNA glycosylase (271 aa).

Pro-2 functions as the Schiff-base intermediate with DNA in the catalytic mechanism. The Proton donor role is filled by Glu-3. Residue Lys-57 is the Proton donor; for beta-elimination activity of the active site. The DNA site is built by His-90, Arg-109, and Lys-151. The FPG-type zinc finger occupies 236–270; it reads HVYGRGGETCTQCGNLLSEIRLGQRTTVFCGICQT. The active-site Proton donor; for delta-elimination activity is the Arg-260.

The protein belongs to the FPG family. Monomer. The cofactor is Zn(2+).

The enzyme catalyses Hydrolysis of DNA containing ring-opened 7-methylguanine residues, releasing 2,6-diamino-4-hydroxy-5-(N-methyl)formamidopyrimidine.. It catalyses the reaction 2'-deoxyribonucleotide-(2'-deoxyribose 5'-phosphate)-2'-deoxyribonucleotide-DNA = a 3'-end 2'-deoxyribonucleotide-(2,3-dehydro-2,3-deoxyribose 5'-phosphate)-DNA + a 5'-end 5'-phospho-2'-deoxyribonucleoside-DNA + H(+). In terms of biological role, involved in base excision repair of DNA damaged by oxidation or by mutagenic agents. Acts as a DNA glycosylase that recognizes and removes damaged bases. Has a preference for oxidized purines, such as 7,8-dihydro-8-oxoguanine (8-oxoG). Has AP (apurinic/apyrimidinic) lyase activity and introduces nicks in the DNA strand. Cleaves the DNA backbone by beta-delta elimination to generate a single-strand break at the site of the removed base with both 3'- and 5'-phosphates. This Shewanella sp. (strain MR-4) protein is Formamidopyrimidine-DNA glycosylase.